The sequence spans 1074 residues: ADAMTS-like protein 4 (1074 aa).

The first 24 residues, 1–24, serve as a signal peptide directing secretion; sequence MENWTGRPWLYLLLLLSLPQLCLD. The TSP type-1 1 domain maps to 48–93; it reads GPWVQWASCSQPCGVGVQRRSRTCQLPTVQLHPSLPLPPRPPRHPE. The disordered stretch occupies residues 77–342; that stretch reads QLHPSLPLPP…QHPGAWLPLL (266 aa). Positions 103–119 are enriched in polar residues; that stretch reads RPQTSPETLPLYRTQSR. The segment covering 132–152 has biased composition (basic and acidic residues); that stretch reads LGREETQEIRAARRSRLRDPI. Positions 206–226 are enriched in polar residues; the sequence is ANGSPQTELPPTELSVHTPSP. Positions 310–323 are enriched in gly residues; that stretch reads GQQGQGPWGTGGTP. N-linked (GlcNAc...) (complex) asparagine glycosylation occurs at Asn-490. TSP type-1 domains are found at residues 723-782, 783-842, 845-909, 910-969, and 970-1026; these read CPPY…QLRL, CGHW…GPCT, WFHS…GPCE, RTWR…QGQA, and CQDR…QPCS. Asn-773 carries N-linked (GlcNAc...) asparagine glycosylation. Residues 1029-1066 enclose the PLAC domain; the sequence is PDDQCKDSSPHCPLVVQARLCVYPYYTATCCRSCAHVL.

In terms of assembly, interacts with CTSB. Interacts with FBN1. Post-translationally, N-glycosylated. Can be O-fucosylated by POFUT2 on a serine or a threonine residue found within the consensus sequence C1-X(2)-(S/T)-C2-G of the TSP type-1 repeat domains where C1 and C2 are the first and second cysteine residue of the repeat, respectively. Fucosylated repeats can then be further glycosylated by the addition of a beta-1,3-glucose residue by the glucosyltransferase, B3GALTL. Fucosylation mediates the efficient secretion of ADAMTS family members. Can also be C-glycosylated with one or two mannose molecules on tryptophan residues within the consensus sequence W-X-X-W of the TPRs. N- and C-glycosylations can also facilitate secretion. Expressed in colon, heart, leukocyte, liver, lung, skeletal muscle, spleen, testis and placenta. Weaker expression in bone marrow, brain tissue, kidney and pancreas. Expression studies in fetal tissues reveal strong expression in heart, kidney, liver, lung and skeletal muscle, but weaker expression in fetal brain and skin.

The protein localises to the secreted. It localises to the extracellular space. It is found in the extracellular matrix. Positive regulation of apoptosis. May facilitate FBN1 microfibril biogenesis. This chain is ADAMTS-like protein 4 (ADAMTSL4), found in Homo sapiens (Human).